A 752-amino-acid chain; its full sequence is MGPLMVLFCLLFVYTGLADSAPSCPQNVNISGGTFTLSHGWAPGSLLTYSCPQGLYPSPASRLCKSSGQWQTPGATRSLSKAVCKPVRCPAPVSFENGIYTPRLGSYPVGGNVSFECEDGFILRGSPVRQCRPNGMWDGETAVCDNGAGHCPNPGISLGAVRTGFRFGHGDKVRYRCSSNLVLTGSSERECQGNGVWSGTEPICRQPYSYDFPEDVAPALGTSFSHMLGATNPTQKTKESLGRKIQIQRSGHLNLYLLLDCSQSVSENDFLIFKESASLMVDRIFSFEINVSVAIITFASKPKVLMSVLNDNSRDMTEVISSLENANYKDHENGTGTNTYAALNSVYLMMNNQMRILGMETMAWQEIRHAIILLTDGKSNMGGSPKTAVDRIREILNINQKRNDYLDIYAIGVGKLDVDWRELNELGSKKDGERHAFILQDTKALHQVFEHMLDVSKLTDTICGVGNMSANASDQERTPWHVTIKPKSQETCRGALISDQWVLTAAHCFRDGNDHSLWRVNVGDPKSQWGKEFLIEKAVISPGFDVFAKKNQGILEFYGDDIALLKLAQKVKMSTHARPICLPCTMEANLALRRPQGSTCRDHENELLNKQSVPAHFVALNGSKLNINLKMGVEWTSCAEVVSQEKTMFPNLTDVREVVTDQFLCSGTQEDESPCKGESGGAVFLERRFRFFQVGLVSWGLYNPCLGSADKNSRKRAPRSKVPPPRDFHINLFRMQPWLRQHLGDVLNFLPL.

An N-terminal signal peptide occupies residues 1–20; the sequence is MGPLMVLFCLLFVYTGLADS. Sushi domains are found at residues 22–86, 87–146, and 149–206; these read PSCP…VCKP, VRCP…VCDN, and GHCP…ICRQ. Cystine bridges form between C24-C64, C51-C84, C89-C131, C117-C144, C151-C191, and C177-C204. N29 carries N-linked (GlcNAc...) asparagine glycosylation. Residue N112 is glycosylated (N-linked (GlcNAc...) asparagine). A VWFA domain is found at 254–452; it reads NLYLLLDCSQ…KALHQVFEHM (199 aa). The MIDAS-like motif motif lies at 260 to 264; that stretch reads DCSQS. Residues S262 and S264 each contribute to the Mg(2+) site. Residues N290 and N333 are each glycosylated (N-linked (GlcNAc...) asparagine). T337 contributes to the Mg(2+) binding site. Intrachain disulfides connect C463-C581, C492-C508, and C584-C600. In terms of domain architecture, Peptidase S1 spans 464 to 744; that stretch reads GVGNMSANAS…MQPWLRQHLG (281 aa). N-linked (GlcNAc...) asparagine glycosylation is found at N467 and N471. Active-site charge relay system residues include H507 and D561. N621 and N651 each carry an N-linked (GlcNAc...) asparagine glycan. 2 disulfides stabilise this stretch: C638–C665 and C675–C705. Residue S679 is the Charge relay system of the active site.

The protein belongs to the peptidase S1 family. In terms of assembly, serine protease component of the C3 convertase, also named C4bC2b, composed of the serine protease complement C2b and complement C4b. Serine protease component of the C5 convertase, also named C4bC2bC3b, composed of the serine protease complement C2b, complement C3b, as well as complement C4b. Mg(2+) is required as a cofactor. Mn(2+) serves as cofactor. Cleaved and activated by different proteases depending on the complement pathway to generate complement C2a and serine protease complement C2b chains. Cleaved and activated by C1S following activation by the classical complement system. Cleaved and activated by MASP2 following activation by the lectin complement system. Cleaved and activated by GZMK following activation by the GZMK complement system.

The protein resides in the secreted. The protein localises to the cell surface. The catalysed reaction is Selective cleavage of Arg-|-Ser bond in complement component C3 alpha-chain to form C3a and C3b, and Arg-|-Xaa bond in complement component C5 alpha-chain to form C5a and C5b.. Precursor of the catalytic component of the C3 and C5 convertase complexes, which are part of the complement pathway, a cascade of proteins that leads to phagocytosis and breakdown of pathogens and signaling that strengthens the adaptive immune system. Component C2 is part of the classical, lectin and GZMK complement systems. Its function is as follows. Catalytic component of the complement C3 and C5 convertase complexes. Following complement activation, recruited to the surface of pathogens by complement C4b opsonin to form the C3 convertase, or C3b and C4b opsonins to form the C5 convertase. As part of the C3 convertase, cleaves and activate C3 into C3a anaphylatoxin and C3b opsonin, the next components of the complement pathways. As part of the C5 convertase, cleaves and activate C5 into C5a anaphylatoxin and C5b component of the membrane attack complex. The protein is Complement C2 of Gorilla gorilla gorilla (Western lowland gorilla).